A 296-amino-acid polypeptide reads, in one-letter code: Tubulin polyglutamylase complex subunit 2 (296 aa).

Basic residues predominate over residues 254–265 (SKNKILIPKKKG). The disordered stretch occupies residues 254 to 296 (SKNKILIPKKKGPVPPASGQKGPGPLPPPTSKPTTGSGNPVRK). Low complexity predominate over residues 285 to 296 (KPTTGSGNPVRK).

As to quaternary structure, part of the neuronal tubulin polyglutamylase complex which contains TPGS1, TPGS2, TTLL1, LRRC49 and NICN1. Interacts with CSTPP1 and LRRC49.

It is found in the cytoplasm. The protein localises to the cytoskeleton. Its subcellular location is the microtubule organizing center. It localises to the centrosome. The protein resides in the centriolar satellite. In terms of biological role, subunit of the tubulin polyglutamylase complex (TPGC). The complex mediates cilia and flagella polyglutamylation which is essential for their biogenesis and motility. The protein is Tubulin polyglutamylase complex subunit 2 (Tpgs2) of Mus musculus (Mouse).